We begin with the raw amino-acid sequence, 2178 residues long: Toxin A (2178 aa).

The segment at 1–93 (MLITREQLMK…RELIKNSRTS (93 aa)) is four-helical bundle. The region spanning 98–474 (KNLSFIWIGG…KPEVNSTVFF (377 aa)) is the GT44 domain. A glucosyltransferase region region spans residues 98-474 (KNLSFIWIGG…KPEVNSTVFF (377 aa)). The tract at residues 98 to 474 (KNLSFIWIGG…KPEVNSTVFF (377 aa)) is N-acetylglucosaminyltransferase region. Residues 103 to 105 (IWI), asparagine 141, 267 to 271 (SDILR), and 284 to 286 (DLD) contribute to the UDP-N-acetyl-alpha-D-glucosamine site. Mg(2+) is bound by residues aspartate 284, aspartate 286, and glutamate 520. 523 to 525 (SSW) contributes to the UDP-N-acetyl-alpha-D-glucosamine binding site. Residues 549 to 806 (NYEDGLNFNK…RVEQLNKVAE (258 aa)) are autoprocessing region. Asparagine 557, lysine 607, and lysine 651 together coordinate 1D-myo-inositol hexakisphosphate. Residues 574–787 (VNSTKIYENY…QISNKYVVYW (214 aa)) enclose the Peptidase C80 domain. The For protease activity role is filled by histidine 657. Residue cysteine 707 is the Nucleophile; for protease activity of the active site. 1D-myo-inositol hexakisphosphate contacts are provided by residues 758–759 (KR) and lysine 782. Residues 807–1485 (FAKDINSIIQ…VYMEGKIFLN (679 aa)) are translocation region. 14 Cell wall-binding repeats span residues 1799 to 1818 (EYGW…INLI), 1820 to 1839 (KKGY…NTGV), 1870 to 1889 (YTGW…NSKA), 1890 to 1909 (VTGL…NGQM), 1910 to 1929 (QIKW…NTGE), 1931 to 1950 (IIGW…EGRL), 1951 to 1970 (LTGY…NING), 2004 to 2023 (YKGW…DSIA), 2024 to 2043 (VTGS…KTAV), 2045 to 2060 (TNGW…YVSN), 2064 to 2083 (VLGY…STGI), 2114 to 2133 (YTGW…YNSA), 2134 to 2153 (VTGW…KTGA), and 2155 to 2174 (TTGL…KGEQ).

The protein belongs to the clostridial glucosylating toxin (LCGT) family. Mn(2+) is required as a cofactor. It depends on Mg(2+) as a cofactor. Post-translationally, undergoes autocatalytic cleavage to release the N-terminal part (N-acetylglucosaminyltransferase TcdA), which constitutes the active part of the toxin, in the host cytosol. 1D-myo-inositol hexakisphosphate-binding (InsP6) activates the peptidase C80 domain and promotes autoprocessing.

Its subcellular location is the secreted. The protein localises to the host endosome membrane. It is found in the host cytoplasm. The protein resides in the host cytosol. It localises to the host cell membrane. It carries out the reaction L-threonyl-[protein] + UDP-N-acetyl-alpha-D-glucosamine = 3-O-(N-acetyl-alpha-D-glucosaminyl)-L-threonyl-[protein] + UDP + H(+). Its activity is regulated as follows. Protease activity is activated upon binding to 1D-myo-inositol hexakisphosphate (InsP6), which induces conformational reorganization. In terms of biological role, precursor of a cytotoxin, which enters into host cells and mediates autoprocessing to release the active toxin (N-acetylglucosaminyltransferase TcdA) into the host cytosol. Once entered into host cells, acidification in the endosome promotes the membrane insertion of the translocation region and formation of a pore, leading to translocation of the GT44 and peptidase C80 domains across the endosomal membrane. This activates the peptidase C80 domain and autocatalytic processing, releasing the N-terminal part (N-acetylglucosaminyltransferase TcdA), which constitutes the active part of the toxin, in the cytosol. Active form of the toxin, which is released into the host cytosol following autoprocessing and inactivates small GTPases. Acts by mediating monoglycosylation of small GTPases of the Rho family (Rac1, RhoA, RhoG and Cdc42) in host cells at the conserved threonine residue located in the switch I region ('Thr-37/35'), using UDP-N-acetyl-alpha-D-glucosamine as the sugar donor. Monoglycosylation of host small GTPases completely prevents the recognition of the downstream effector, blocking the GTPases in their inactive form, leading to actin cytoskeleton disruption and cell death. The polypeptide is Toxin A (tcdA) (Clostridium novyi).